Reading from the N-terminus, the 204-residue chain is MGAYKYMQELWRKKQSNVMRFLLRVRCWQYRQLSSLHRAPRPTRPDKARRLGYKAKQGYVIYRIRVRRGGRKRPVPKGATYGKPVHHGVNQIKFARSLQSVAEERAGRHCGGLRVLNSYWVGEDSTYKFFEVILIDTFHKAIRRNPDTQWITKAVHKHREMRGLTSAGKKSRGLGKGHKFHLTIGGSRRAAWKRRNTLQLHRYR.

Belongs to the eukaryotic ribosomal protein eL15 family. As to quaternary structure, component of the large ribosomal subunit.

It is found in the cytoplasm. Functionally, component of the large ribosomal subunit. The ribosome is a large ribonucleoprotein complex responsible for the synthesis of proteins in the cell. The chain is Large ribosomal subunit protein eL15 (rpl15) from Hypophthalmichthys nobilis (Bighead carp).